A 209-amino-acid chain; its full sequence is LexA repressor (209 aa).

Positions 30-50 (RVEIAREIGFKSPNAAEEHLK) form a DNA-binding region, H-T-H motif. Active-site for autocatalytic cleavage activity residues include serine 126 and lysine 163.

The protein belongs to the peptidase S24 family. In terms of assembly, homodimer.

It carries out the reaction Hydrolysis of Ala-|-Gly bond in repressor LexA.. In terms of biological role, represses a number of genes involved in the response to DNA damage (SOS response), including recA and lexA. In the presence of single-stranded DNA, RecA interacts with LexA causing an autocatalytic cleavage which disrupts the DNA-binding part of LexA, leading to derepression of the SOS regulon and eventually DNA repair. The sequence is that of LexA repressor from Glaesserella parasuis serovar 5 (strain SH0165) (Haemophilus parasuis).